A 421-amino-acid polypeptide reads, in one-letter code: Probable acid phosphatase (421 aa).

The active-site Proton donor is Asp-229.

It catalyses the reaction a phosphate monoester + H2O = an alcohol + phosphate. The protein is Probable acid phosphatase of Kluyveromyces lactis (strain ATCC 8585 / CBS 2359 / DSM 70799 / NBRC 1267 / NRRL Y-1140 / WM37) (Yeast).